The primary structure comprises 689 residues: Glycine--tRNA ligase beta subunit (689 aa).

This sequence belongs to the class-II aminoacyl-tRNA synthetase family. Tetramer of two alpha and two beta subunits.

Its subcellular location is the cytoplasm. It catalyses the reaction tRNA(Gly) + glycine + ATP = glycyl-tRNA(Gly) + AMP + diphosphate. This is Glycine--tRNA ligase beta subunit from Glaesserella parasuis serovar 5 (strain SH0165) (Haemophilus parasuis).